An 869-amino-acid chain; its full sequence is Bifunctional uridylyltransferase/uridylyl-removing enzyme (869 aa).

The interval Met1–Pro332 is uridylyltransferase. The interval Leu333 to Leu691 is uridylyl-removing. Positions Val450–Leu572 constitute an HD domain. ACT domains follow at residues Glu692–Pro774 and Arg798–Val869.

The protein belongs to the GlnD family. The cofactor is Mg(2+).

It catalyses the reaction [protein-PII]-L-tyrosine + UTP = [protein-PII]-uridylyl-L-tyrosine + diphosphate. The enzyme catalyses [protein-PII]-uridylyl-L-tyrosine + H2O = [protein-PII]-L-tyrosine + UMP + H(+). With respect to regulation, uridylyltransferase (UTase) activity is inhibited by glutamine, while glutamine activates uridylyl-removing (UR) activity. Its function is as follows. Modifies, by uridylylation and deuridylylation, the PII regulatory proteins (GlnB and homologs), in response to the nitrogen status of the cell that GlnD senses through the glutamine level. Under low glutamine levels, catalyzes the conversion of the PII proteins and UTP to PII-UMP and PPi, while under higher glutamine levels, GlnD hydrolyzes PII-UMP to PII and UMP (deuridylylation). Thus, controls uridylylation state and activity of the PII proteins, and plays an important role in the regulation of nitrogen assimilation and metabolism. This Xanthomonas axonopodis pv. citri (strain 306) protein is Bifunctional uridylyltransferase/uridylyl-removing enzyme.